The chain runs to 609 residues: Glutamine--fructose-6-phosphate aminotransferase [isomerizing] (609 aa).

Catalysis depends on Cys-2, which acts as the Nucleophile; for GATase activity. In terms of domain architecture, Glutamine amidotransferase type-2 spans 2-218 (CGIVGAIAQR…EGDIAEITRR (217 aa)). 2 consecutive SIS domains span residues 286 to 426 (ADEL…LKGL) and 458 to 599 (LAED…VDQP). The For Fru-6P isomerization activity role is filled by Lys-604.

As to quaternary structure, homodimer.

Its subcellular location is the cytoplasm. The enzyme catalyses D-fructose 6-phosphate + L-glutamine = D-glucosamine 6-phosphate + L-glutamate. In terms of biological role, catalyzes the first step in hexosamine metabolism, converting fructose-6P into glucosamine-6P using glutamine as a nitrogen source. This is Glutamine--fructose-6-phosphate aminotransferase [isomerizing] from Shigella flexneri.